The primary structure comprises 450 residues: Tubulin alpha-3 chain (450 aa).

Q11 lines the GTP pocket. Residue K40 is modified to N6-acetyllysine. 6 residues coordinate GTP: E71, G144, T145, T179, N206, and N228. A Mg(2+)-binding site is contributed by E71. E254 is a catalytic residue.

This sequence belongs to the tubulin family. As to quaternary structure, dimer of alpha and beta chains. A typical microtubule is a hollow water-filled tube with an outer diameter of 25 nm and an inner diameter of 15 nM. Alpha-beta heterodimers associate head-to-tail to form protofilaments running lengthwise along the microtubule wall with the beta-tubulin subunit facing the microtubule plus end conferring a structural polarity. Microtubules usually have 13 protofilaments but different protofilament numbers can be found in some organisms and specialized cells. Mg(2+) is required as a cofactor. Post-translationally, undergoes a tyrosination/detyrosination cycle, the cyclic removal and re-addition of a C-terminal tyrosine residue by the enzymes tubulin tyrosine carboxypeptidase (TTCP) and tubulin tyrosine ligase (TTL), respectively. Acetylation of alpha chains at Lys-40 stabilizes microtubules and affects affinity and processivity of microtubule motors. This modification has a role in multiple cellular functions, ranging from cell motility, cell cycle progression or cell differentiation to intracellular trafficking and signaling.

The protein resides in the cytoplasm. The protein localises to the cytoskeleton. It catalyses the reaction GTP + H2O = GDP + phosphate + H(+). Its function is as follows. Tubulin is the major constituent of microtubules, a cylinder consisting of laterally associated linear protofilaments composed of alpha- and beta-tubulin heterodimers. Microtubules grow by the addition of GTP-tubulin dimers to the microtubule end, where a stabilizing cap forms. Below the cap, tubulin dimers are in GDP-bound state, owing to GTPase activity of alpha-tubulin. This Zea mays (Maize) protein is Tubulin alpha-3 chain (TUBA3).